The sequence spans 270 residues: Centriole, cilia and spindle-associated protein (270 aa).

Residue M1 is modified to N-acetylmethionine. Residues 9–15 carry the ST]-E-Y-X(3)-Y motif 1; required for efficient microtubule binding and stabilization motif; the sequence is SEYMKRY. Disordered regions lie at residues 50-201 and 231-255; these read DDWG…SQKT and LVAQRQRAHSVDVEKNRKMKASSSE. Positions 53-67 are enriched in low complexity; it reads GPAGSSEDSASSESS. The segment covering 75–86 has biased composition (pro residues); the sequence is RCAPPSPPPPVE. The segment covering 92–101 has biased composition (basic and acidic residues); sequence EAERRARGAP. Residues 102 to 118 are compositionally biased toward acidic residues; sequence EEQDAEAGDAEAEDAED. Positions 127–144 are enriched in basic and acidic residues; that stretch reads KDVEDKPEQQTRTRETDK. Positions 145-156 are enriched in polar residues; it reads SPTSTEPRQQPS. Residues 260–266 carry the ST]-E-Y-X(3)-Y motif 2; required for efficient microtubule binding and stabilization motif; sequence TEYMRCY.

Belongs to the CCSAP family. As to quaternary structure, associates with microtubules; the association occurs on polyglutamylated tubulin.

The protein localises to the cytoplasm. It is found in the cytoskeleton. It localises to the microtubule organizing center. The protein resides in the centrosome. Its subcellular location is the centriole. The protein localises to the spindle. It is found in the cilium basal body. It localises to the cilium axoneme. The protein resides in the cell projection. Its subcellular location is the axon. The protein localises to the cilium. Functionally, plays a role in microtubule (MT) stabilization and this stabilization involves the maintenance of NUMA1 at the spindle poles. Colocalizes with polyglutamylated MTs to promote MT stabilization and regulate bipolar spindle formation in mitosis. Binding of CCSAP to centrosomes and the spindle around centrosomes during mitosis inhibits MT depolymerization, thereby stabilizing the mitotic spindle. May play a role in embryonic development. May be required for proper cilia beating. This chain is Centriole, cilia and spindle-associated protein (CCSAP), found in Homo sapiens (Human).